A 108-amino-acid polypeptide reads, in one-letter code: Envelope small membrane protein (108 aa).

Residues M1–E10 are Virion surface-facing. Residues N11–G31 form a helical membrane-spanning segment. Residues R32–S108 are Intravirion-facing. The interval N88–S108 is disordered. A compositionally biased stretch (polar residues) spans G89–D100.

Belongs to the gammacoronaviruses E protein family. Homooligomer. Interacts with the M membrane protein in the budding compartment of the host cell, which is located between endoplasmic reticulum and the Golgi complex. The cytoplasmic tails of both proteins are important for this function. Interacts with Nucleoprotein.

It localises to the host Golgi apparatus membrane. Functionally, plays a central role in virus morphogenesis and assembly. Acts as a viroporin and self-assembles in host membranes forming pentameric protein-lipid pores that allow ion transport. Also plays a role in the induction of apoptosis. The protein is Envelope small membrane protein of Gallus gallus (Chicken).